The sequence spans 182 residues: T-cell surface glycoprotein CD3 gamma chain (182 aa).

The signal sequence occupies residues 1 to 22 (MEQGKGLAVLILAIILLQGTLA). At 23-116 (QSIKGNHLVK…CIELNAATIS (94 aa)) the chain is on the extracellular side. One can recognise an Ig-like domain in the interval 37–94 (QEDGSVLLTCDAEAKNITWFKDGKMIGFLTEDKKKWNLGSNAKDPRGMYQCKGSQNKS). A disulfide bridge links Cys-46 with Cys-87. N-linked (GlcNAc...) asparagine glycans are attached at residues Asn-52 and Asn-92. A helical transmembrane segment spans residues 117 to 137 (GFLFAEIVSIFVLAVGVYFIA). Over 138–182 (GQDGVRQSRASDKQTLLPNDQLYQPLKDREDDQYSHLQGNQLRRN) the chain is Cytoplasmic. At Ser-145 the chain carries Phosphoserine. Ser-148 carries the post-translational modification Phosphoserine; by PKC. Residues 149–177 (DKQTLLPNDQLYQPLKDREDDQYSHLQGN) enclose the ITAM domain. Residues 153-154 (LL) carry the Di-leucine motif motif.

The TCR-CD3 complex is composed of a CD3D/CD3E and a CD3G/CD3E heterodimers that preferentially associate with TCRalpha and TCRbeta, respectively, to form TCRalpha/CD3E/CD3G and TCRbeta/CD3G/CD3E trimers. In turn, the hexamer interacts with CD3Z homodimer to form the TCR-CD3 complex. Alternatively, TCRalpha and TCRbeta can be replaced by TCRgamma and TCRdelta. Phosphorylated on Tyr residues after T-cell receptor triggering by LCK in association with CD4/CD8. Phosphorylated also by PKC; leading to the TCR complex down-regulation. In terms of processing, phosphorylated on Tyr residues after T-cell receptor triggering by LCK in association with CD4/CD8.

The protein resides in the cell membrane. Part of the TCR-CD3 complex present on T-lymphocyte cell surface that plays an essential role in adaptive immune response. When antigen presenting cells (APCs) activate T-cell receptor (TCR), TCR-mediated signals are transmitted across the cell membrane by the CD3 chains CD3D, CD3E, CD3G and CD3Z. All CD3 chains contain immunoreceptor tyrosine-based activation motifs (ITAMs) in their cytoplasmic domain. Upon TCR engagement, these motifs become phosphorylated by Src family protein tyrosine kinases LCK and FYN, resulting in the activation of downstream signaling pathways. In addition to this role of signal transduction in T-cell activation, CD3G plays an essential role in the dynamic regulation of TCR expression at the cell surface. Indeed, constitutive TCR cycling is dependent on the di-leucine-based (diL) receptor-sorting motif present in CD3G. This chain is T-cell surface glycoprotein CD3 gamma chain (CD3G), found in Homo sapiens (Human).